The primary structure comprises 796 residues: Protein U58 (796 aa).

The protein belongs to the herpesviridae UL87 family.

In Elephas maximus (Indian elephant), this protein is Protein U58.